A 147-amino-acid chain; its full sequence is Lysozyme C, intestinal isozyme (147 aa).

An N-terminal signal peptide occupies residues 1-18 (MKAVLILGLLLLSVTVQG). One can recognise a C-type lysozyme domain in the interval 19–147 (KKFEKCELAR…VSSYIRGCKL (129 aa)). Intrachain disulfides connect Cys24–Cys145, Cys48–Cys133, Cys83–Cys99, and Cys95–Cys113. Catalysis depends on residues Glu53 and Asp71.

It belongs to the glycosyl hydrolase 22 family.

It catalyses the reaction Hydrolysis of (1-&gt;4)-beta-linkages between N-acetylmuramic acid and N-acetyl-D-glucosamine residues in a peptidoglycan and between N-acetyl-D-glucosamine residues in chitodextrins.. Its function is as follows. Lysozymes have primarily a bacteriolytic function; those in tissues and body fluids are associated with the monocyte-macrophage system and enhance the activity of immunoagents. This Bos taurus (Bovine) protein is Lysozyme C, intestinal isozyme.